The sequence spans 271 residues: Type III pantothenate kinase (271 aa).

6-13 (DVRNTHTV) is an ATP binding site. Residue 109-112 (GADR) participates in substrate binding. Asp111 (proton acceptor) is an active-site residue. Asp131 provides a ligand contact to K(+). Ser134 is a binding site for ATP. Position 186 (Thr186) interacts with substrate.

The protein belongs to the type III pantothenate kinase family. In terms of assembly, homodimer. It depends on NH4(+) as a cofactor. K(+) is required as a cofactor.

Its subcellular location is the cytoplasm. The enzyme catalyses (R)-pantothenate + ATP = (R)-4'-phosphopantothenate + ADP + H(+). Its pathway is cofactor biosynthesis; coenzyme A biosynthesis; CoA from (R)-pantothenate: step 1/5. In terms of biological role, catalyzes the phosphorylation of pantothenate (Pan), the first step in CoA biosynthesis. The sequence is that of Type III pantothenate kinase from Mycolicibacterium smegmatis (strain ATCC 700084 / mc(2)155) (Mycobacterium smegmatis).